Reading from the N-terminus, the 56-residue chain is Large ribosomal subunit protein bL33 (56 aa).

This sequence belongs to the bacterial ribosomal protein bL33 family.

This is Large ribosomal subunit protein bL33 from Rickettsia bellii (strain OSU 85-389).